A 436-amino-acid chain; its full sequence is GTPase Der (436 aa).

EngA-type G domains follow at residues 4-167 (PVIA…PKIE) and 176-351 (IRFS…ESHS). GTP-binding positions include 10–17 (GRPNVGKS), 57–61 (DTGGI), 119–122 (NKVD), 182–189 (GRPNVGKS), 229–233 (DTAGM), and 294–297 (NKWD). Residues 352–436 (IRIQTNVLND…PIHIIARARD (85 aa)) form the KH-like domain.

Belongs to the TRAFAC class TrmE-Era-EngA-EngB-Septin-like GTPase superfamily. EngA (Der) GTPase family. Associates with the 50S ribosomal subunit.

In terms of biological role, GTPase that plays an essential role in the late steps of ribosome biogenesis. The polypeptide is GTPase Der (Bacillus cereus (strain ATCC 10987 / NRS 248)).